The primary structure comprises 164 residues: MVLKTELCRFSGAKIYPGRGIRFIRGDSQVFLFVNSKCKRYFHNRLKPSKLTWTAMFRKQHKKDAAQEAVKKRRRATKKPYSRSIVGATLEVIQKKRTEKPEVRDAAREAALREIKERIKKTKDEKKAKKAEVASKAQKSQGKGNVQKGALPKGPKMGGGGGKA.

2 disordered regions span residues 63–82 (KDAA…KPYS) and 117–164 (ERIK…GGKA). Basic residues predominate over residues 71–81 (KKRRRATKKPY). Residues 117 to 133 (ERIKKTKDEKKAKKAEV) are compositionally biased toward basic and acidic residues.

The protein belongs to the eukaryotic ribosomal protein eL24 family.

Its subcellular location is the cytoplasm. The sequence is that of Large ribosomal subunit protein eL24 (RPL24) from Cicer arietinum (Chickpea).